The primary structure comprises 122 residues: Small ribosomal subunit protein uS13 (122 aa).

Residues 95–122 (GLPVRGQRTHTNARTRKGKAKPIAGKKK) are disordered.

The protein belongs to the universal ribosomal protein uS13 family. As to quaternary structure, part of the 30S ribosomal subunit. Forms a loose heterodimer with protein S19. Forms two bridges to the 50S subunit in the 70S ribosome.

Its function is as follows. Located at the top of the head of the 30S subunit, it contacts several helices of the 16S rRNA. In the 70S ribosome it contacts the 23S rRNA (bridge B1a) and protein L5 of the 50S subunit (bridge B1b), connecting the 2 subunits; these bridges are implicated in subunit movement. Contacts the tRNAs in the A and P-sites. The chain is Small ribosomal subunit protein uS13 from Zymomonas mobilis subsp. mobilis (strain ATCC 31821 / ZM4 / CP4).